The sequence spans 211 residues: Transcription antitermination protein NusB (211 aa).

It belongs to the NusB family.

In terms of biological role, involved in transcription antitermination. Required for transcription of ribosomal RNA (rRNA) genes. Binds specifically to the boxA antiterminator sequence of the ribosomal RNA (rrn) operons. The sequence is that of Transcription antitermination protein NusB from Gloeobacter violaceus (strain ATCC 29082 / PCC 7421).